The following is an 829-amino-acid chain: Protein SEY1 (829 aa).

The Cytoplasmic segment spans residues Met1–Gln721. Residues Gly87–Tyr310 enclose the GB1/RHD3-type G domain. Gly97–Ser104 is a GTP binding site. A coiled-coil region spans residues Glu487–Gln525. The helical transmembrane segment at Ile722–Leu742 threads the bilayer. Over Phe743–Pro745 the chain is Lumenal. The chain crosses the membrane as a helical span at residues Leu746–Leu766. Over Ala767–Lys829 the chain is Cytoplasmic. The tract at residues Pro806–Lys829 is disordered. The span at Glu814–Lys829 shows a compositional bias: basic and acidic residues.

Belongs to the TRAFAC class dynamin-like GTPase superfamily. GB1/RHD3 GTPase family. RHD3 subfamily.

It is found in the endoplasmic reticulum membrane. Its function is as follows. Cooperates with the reticulon proteins and tubule-shaping DP1 family proteins to generate and maintain the structure of the tubular endoplasmic reticulum network. Has GTPase activity, which is required for its function in ER organization. In Cryptococcus neoformans var. neoformans serotype D (strain B-3501A) (Filobasidiella neoformans), this protein is Protein SEY1.